The sequence spans 210 residues: Transmembrane protein 61 (210 aa).

2 helical membrane passes run 18–38 and 69–89; these read YCMT…FAWW and VSFV…LWSV. The disordered stretch occupies residues 140–172; it reads VAEGPPTPPAYPTEEALEPSGSRDALLSTQPAW.

The protein resides in the membrane. The chain is Transmembrane protein 61 (TMEM61) from Homo sapiens (Human).